Here is an 83-residue protein sequence, read N- to C-terminus: Delta-conotoxin-like Ac6.1 (83 aa).

A signal peptide spans 1–22 (MKLTCVVIVAVLFLTAWTFVMA). A propeptide spanning residues 23-51 (DDSRYGLKDLFPKARHEMKNPEASKLNKR) is cleaved from the precursor. 3 disulfide bridges follow: cysteine 54/cysteine 69, cysteine 61/cysteine 73, and cysteine 68/cysteine 78. Residues proline 57 and proline 65 each carry the 4-hydroxyproline modification.

It belongs to the conotoxin O1 superfamily. In terms of tissue distribution, expressed by the venom duct.

It is found in the secreted. In terms of biological role, delta-conotoxins bind to site 6 of voltage-gated sodium channels (Nav) and inhibit the inactivation process. The polypeptide is Delta-conotoxin-like Ac6.1 (Conus achatinus (Little frog cone)).